The chain runs to 2655 residues: Probable polyketide synthase 42 (2655 aa).

Positions 16–445 (QNGVAVIGVG…GSNCCIILSE (430 aa)) constitute a Ketosynthase family 3 (KS3) domain. Active-site for beta-ketoacyl synthase activity residues include C186, H325, and H368. Residues 634-667 (GIKSDIMVGHSFGEIACSYCSGMVDFKTLCYLTY) are acyl/malonyl transferase. Catalysis depends on S644, which acts as the For acyl/malonyl transferase activity. Residues 926–1059 (HPTWKKANKN…ANYSLFKHND (134 aa)) are N-terminal hotdog fold. Positions 926–1234 (HPTWKKANKN…CKSSIPIIDS (309 aa)) constitute a PKS/mFAS DH domain. Residue H970 is the Proton acceptor; for dehydratase activity of the active site. Residues 1074–1234 (NYTIISKDEL…CKSSIPIIDS (161 aa)) form a C-terminal hotdog fold region. The active-site Proton donor; for dehydratase activity is D1146. The segment at 1700 to 1719 (YNNNNNNNNNNNNNNNNNNN) is disordered. Residues 2517–2594 (NENNNIGDLL…TTIEIIIKGY (78 aa)) form the Carrier domain. S2554 carries the O-(pantetheine 4'-phosphoryl)serine modification. Residues 2612-2655 (SVVQKETIKDNNENKDDIKIDMDDKKENLKGKKENIDDKKENNN) are disordered. Positions 2617-2655 (ETIKDNNENKDDIKIDMDDKKENLKGKKENIDDKKENNN) are enriched in basic and acidic residues. Positions 2618–2655 (TIKDNNENKDDIKIDMDDKKENLKGKKENIDDKKENNN) form a coiled coil.

Pantetheine 4'-phosphate serves as cofactor.

Functionally, probable polyketide synthase. The polypeptide is Probable polyketide synthase 42 (pks42) (Dictyostelium discoideum (Social amoeba)).